Here is a 412-residue protein sequence, read N- to C-terminus: Membrane fusion protein MtrC (412 aa).

A signal peptide spans 1-24 (MAFYASKAMRAAALAAAVALALSS). Cys25 carries N-palmitoyl cysteine lipidation. Cys25 carries the S-diacylglycerol cysteine lipid modification. Residues 377–412 (AKKVTPKEWAPSENQAAAPQAGVQTASEAKPASEAK) are disordered. Residues 388–403 (SENQAAAPQAGVQTAS) are compositionally biased toward polar residues.

The protein belongs to the membrane fusion protein (MFP) (TC 8.A.1) family.

The protein localises to the cell inner membrane. Cell membrane lipoprotein, involved in cell membrane permeability to hydrophobic compounds such as antibiotics, dyes and detergents. This chain is Membrane fusion protein MtrC (mtrC), found in Neisseria gonorrhoeae.